A 788-amino-acid chain; its full sequence is Protein translocase subunit SecA 2 (788 aa).

ATP contacts are provided by residues glutamine 86, 104-108 (GEGKT), and aspartate 493.

The protein belongs to the SecA family. In terms of assembly, monomer and homodimer. Part of the essential Sec protein translocation apparatus which comprises SecA, SecYEG and auxiliary proteins SecDF. Other proteins may also be involved.

The protein resides in the cell membrane. Its subcellular location is the cytoplasm. It carries out the reaction ATP + H2O + cellular proteinSide 1 = ADP + phosphate + cellular proteinSide 2.. Functionally, part of the Sec protein translocase complex. Interacts with the SecYEG preprotein conducting channel. Has a central role in coupling the hydrolysis of ATP to the transfer of proteins into and across the cell membrane, serving as an ATP-driven molecular motor driving the stepwise translocation of polypeptide chains across the membrane. This Bacillus thuringiensis (strain Al Hakam) protein is Protein translocase subunit SecA 2.